The following is a 733-amino-acid chain: Forkhead box protein K1 (733 aa).

Ala2 carries the N-acetylalanine modification. The tract at residues 2–40 (AEVGEDSGARALLALRSAPCSPVLCAAAAAAAFPAAAPP) is interaction with SIN3A and SIN3B. The interval 36–79 (AAAPPPAPAQPQPPPGPPPPPPPPLPPGAIAGAGSSGGSSGVSG) is disordered. Residues 37–62 (AAPPPAPAQPQPPPGPPPPPPPPLPP) show a composition bias toward pro residues. The segment at 95–420 (AASVRQSPGP…PLSSRSAPAS (326 aa)) is required for interaction with FOXO4 and MEF2C. At Ser101 the chain carries Phosphoserine. The region spanning 123–175 (VTIGRNSSQGSVDLSMGLSSFISRRHLQLSFQEPHFYLRCLGKNGVFVDGAFQ) is the FHA domain. Omega-N-methylarginine occurs at positions 161 and 191. Phosphoserine occurs at positions 213, 223, 239, and 243. Phosphothreonine occurs at positions 245 and 247. 4 positions are modified to phosphoserine: Ser253, Ser257, Ser295, and Ser299. 2 disordered regions span residues 287 to 306 (ASEQQADTSGGDSPKDESKP) and 413 to 436 (SSRSAPASPTHPGLMSPRSGGLQT). A DNA-binding region (fork-head) is located at residues 305–400 (KPPFSYAQLI…EQAFRKRRQR (96 aa)). 2 positions are modified to phosphoserine: Ser416 and Ser420. A Phosphothreonine modification is found at Thr422. Ser428 carries the phosphoserine modification. The residue at position 436 (Thr436) is a Phosphothreonine. Residues Ser441, Ser445, and Ser459 each carry the phosphoserine modification. Positions 676-697 (VAATATTTPATATTASASASST) are enriched in low complexity. A disordered region spans residues 676 to 733 (VAATATTTPATATTASASASSTGEPEVKRSRVEEPSGAVTTPAGVIAAAGPQGPGTGE). The span at 700 to 709 (PEVKRSRVEE) shows a compositional bias: basic and acidic residues.

Interacts with SIN3A and SIN3B (via PAH2) to form a complex which represses transcription. Component of SIN3A-, but not SIN3B-, containing multiprotein complexes. Interacts with FOXO4 and MEF2C; both interactions inhibit FOXO4 and MEF2C transactivation activity. Interacts (when phosphorylated) with YWHAE/14-3-3-epsilon; promotes sequestration in the cytoplasm and leads to impaired ability to bind DNA. Interacts with FHL2. Interacts with SRF. Interacts with DVL2 and DVL3; the interaction induces DVL2 nuclear translocation. Interacts with BAP1 (when phosphorylated). Accessory component of the polycomb repressive deubiquitinase (PR-DUB) complex, at least composed of BAP1, one of ASXL1, ASXL2 or (probably) ASXL3 and one of MBD5 or MBD6. The PR-DUB core associates with a number of accessory proteins, including FOXK1, FOXK2, KDM1B, HCFC1 and OGT. Post-translationally, phosphorylation by GSK3 (GSK3A or GSK3B) promotes interaction with YWHAE/14-3-3-epsilon and retention in the cytoplasm. In response to mTORC1 signaling, phosphorylation by GSK3 is prevented, leading to translocation to the nucleus. Expressed both developing and adult tissues. In adults, significant expression is seen in tumors of the brain, colon and lymph node.

Its subcellular location is the nucleus. It localises to the cytoplasm. Transcriptional regulator involved in different processes such as glucose metabolism, aerobic glycolysis, muscle cell differentiation and autophagy. Recognizes and binds the forkhead DNA sequence motif (5'-GTAAACA-3') and can both act as a transcription activator or repressor, depending on the context. Together with FOXK2, acts as a key regulator of metabolic reprogramming towards aerobic glycolysis, a process in which glucose is converted to lactate in the presence of oxygen. Acts by promoting expression of enzymes for glycolysis (such as hexokinase-2 (HK2), phosphofructokinase, pyruvate kinase (PKLR) and lactate dehydrogenase), while suppressing further oxidation of pyruvate in the mitochondria by up-regulating pyruvate dehydrogenase kinases PDK1 and PDK4. Probably plays a role in gluconeogenesis during overnight fasting, when lactate from white adipose tissue and muscle is the main substrate. Involved in mTORC1-mediated metabolic reprogramming: in response to mTORC1 signaling, translocates into the nucleus and regulates the expression of genes associated with glycolysis and downstream anabolic pathways, such as HIF1A, thereby regulating glucose metabolism. Together with FOXK2, acts as a negative regulator of autophagy in skeletal muscle: in response to starvation, enters the nucleus, binds the promoters of autophagy genes and represses their expression, preventing proteolysis of skeletal muscle proteins. Acts as a transcriptional regulator of the myogenic progenitor cell population in skeletal muscle. Binds to the upstream enhancer region (CCAC box) of myoglobin (MB) gene, regulating the myogenic progenitor cell population. Promotes muscle progenitor cell proliferation by repressing the transcriptional activity of FOXO4, thereby inhibiting myogenic differentiation. Involved in remodeling processes of adult muscles that occur in response to physiological stimuli. Required to correct temporal orchestration of molecular and cellular events necessary for muscle repair. Represses myogenic differentiation by inhibiting MEFC activity. Positively regulates Wnt/beta-catenin signaling by translocating DVL into the nucleus. Reduces virus replication, probably by binding the interferon stimulated response element (ISRE) to promote antiviral gene expression. Accessory component of the polycomb repressive deubiquitinase (PR-DUB) complex; recruits the PR-DUB complex to specific FOXK1-bound genes. In Homo sapiens (Human), this protein is Forkhead box protein K1.